Reading from the N-terminus, the 83-residue chain is Cytochrome b559 subunit alpha (83 aa).

The helical transmembrane segment at 21–35 threads the bilayer; that stretch reads VIHSITIPSLFIAGW. Heme is bound at residue His23.

It belongs to the PsbE/PsbF family. As to quaternary structure, heterodimer of an alpha subunit and a beta subunit. PSII is composed of 1 copy each of membrane proteins PsbA, PsbB, PsbC, PsbD, PsbE, PsbF, PsbH, PsbI, PsbJ, PsbK, PsbL, PsbM, PsbT, PsbX, PsbY, PsbZ, Psb30/Ycf12, at least 3 peripheral proteins of the oxygen-evolving complex and a large number of cofactors. It forms dimeric complexes. Heme b is required as a cofactor.

The protein resides in the plastid. The protein localises to the chloroplast thylakoid membrane. Functionally, this b-type cytochrome is tightly associated with the reaction center of photosystem II (PSII). PSII is a light-driven water:plastoquinone oxidoreductase that uses light energy to abstract electrons from H(2)O, generating O(2) and a proton gradient subsequently used for ATP formation. It consists of a core antenna complex that captures photons, and an electron transfer chain that converts photonic excitation into a charge separation. This chain is Cytochrome b559 subunit alpha, found in Pinus koraiensis (Korean pine).